A 595-amino-acid chain; its full sequence is Actin-histidine N-methyltransferase (595 aa).

The tract at residues 1-22 (MGKKSRVKTQKSGTGATATVSP) is disordered. Residues 10–20 (QKSGTGATATV) are compositionally biased toward polar residues. Residues Arg75, 104-106 (EGF), Arg254, 275-279 (DMCNH), and 325-327 (SGF) contribute to the S-adenosyl-L-methionine site. The 221-residue stretch at 94-314 (EGFEMVNFKE…AGEQIYIFYG (221 aa)) folds into the SET domain. Ser513 carries the post-translational modification Phosphoserine. The span at 549-563 (ENGLVNGENSIPNGT) shows a compositional bias: polar residues. Residues 549-595 (ENGLVNGENSIPNGTRSEDENLNQEESKRAVEDAKGSSSDRADAVKE) form a disordered region. Basic and acidic residues predominate over residues 573–595 (EESKRAVEDAKGSSSDRADAVKE).

It belongs to the class V-like SAM-binding methyltransferase superfamily. SETD3 actin-histidine methyltransferase family. In terms of assembly, interacts with MYOD1. Phosphorylated by GSK3B, which is required for recognition by the SCF(FBXW7) complex and subsequent degradation. In terms of processing, ubiquitinated by the SCF(FBXW7) complex following phosphorylation by GSK3B, leading to its degradation by the proteasome.

It is found in the cytoplasm. The protein resides in the nucleus. The enzyme catalyses L-histidyl-[protein] + S-adenosyl-L-methionine = N(tele)-methyl-L-histidyl-[protein] + S-adenosyl-L-homocysteine + H(+). Functionally, protein-histidine N-methyltransferase that specifically mediates 3-methylhistidine (tele-methylhistidine) methylation of actin at 'His-73'. Histidine methylation of actin is required for smooth muscle contraction of the laboring uterus during delivery. Does not have protein-lysine N-methyltransferase activity and probably only catalyzes histidine methylation of actin. This is Actin-histidine N-methyltransferase from Callithrix jacchus (White-tufted-ear marmoset).